Here is an 89-residue protein sequence, read N- to C-terminus: Large ribosomal subunit protein eL34 (89 aa).

The interval 41–69 (RPLNGVPRGRPSELRKLPKTAKRPERPYP) is disordered. Residues 50 to 66 (RPSELRKLPKTAKRPER) show a composition bias toward basic and acidic residues.

Belongs to the eukaryotic ribosomal protein eL34 family.

This is Large ribosomal subunit protein eL34 from Thermococcus gammatolerans (strain DSM 15229 / JCM 11827 / EJ3).